Consider the following 1475-residue polypeptide: Alpha-glucan water dikinase, chloroplastic (1475 aa).

The transit peptide at Met1–Ala85 directs the protein to the chloroplast. His1077 functions as the Tele-phosphohistidine intermediate in the catalytic mechanism.

This sequence belongs to the PEP-utilizing enzyme family. Homodimer. The cofactor is Mg(2+).

Its subcellular location is the plastid. It is found in the chloroplast. It catalyses the reaction [(1-&gt;4)-alpha-D-glucosyl](n) + n ATP + n H2O = [(1-&gt;4)-6-phospho-alpha-D-glucosyl](n) + n AMP + n phosphate + 2n H(+). In terms of biological role, mediates the incorporation of phosphate into starch-like alpha-glucan, mostly at the C-6 position of glucose units. Acts as an overall regulator of starch mobilization. Required for starch degradation, suggesting that the phosphate content of starch regulates its degradability. This is Alpha-glucan water dikinase, chloroplastic (R1) from Citrus reticulata (Tangerine).